Here is a 375-residue protein sequence, read N- to C-terminus: MSDTIARPAETARTLPRILPPMAMLAELTHRCPLACPYCSNPIALTQAKEELSTEEWTGVFAQAADLGVLHLHLSGGEPAARRDLVELTQAASSLGLYTNLITSGVGLTEARMNSLADAGLDHIQLSIQGVSPESADRIGGYKGGYERKMAVAGWAADAAIPLTLNAVCHRQNMGEIDEMIELAIRLKARRIEVATVQFHGWAERNKEVLMPTREQVECATRTVAEAREKYQGILVIDYVPADYYSKYPKACMGGWGRVGLNVTPSGRVLPCHAAETIPSLSFENVRENSLSSIWYESNAFNAYRGEDWMPELCRSCERKKVDFGGCRCQAMALAGDASATDPVCIRSPLRDRLTLEVEQLSAPSVVPMNYRGRA.

One can recognise a Radical SAM core domain in the interval 18-235 (ILPPMAMLAE…EAREKYQGIL (218 aa)). [4Fe-4S] cluster contacts are provided by cysteine 32, cysteine 36, and cysteine 39.

Belongs to the radical SAM superfamily. PqqE family. As to quaternary structure, interacts with PqqD. The interaction is necessary for activity of PqqE. It depends on [4Fe-4S] cluster as a cofactor.

The enzyme catalyses [PQQ precursor protein] + S-adenosyl-L-methionine = E-Y cross-linked-[PQQ precursor protein] + 5'-deoxyadenosine + L-methionine + H(+). Its pathway is cofactor biosynthesis; pyrroloquinoline quinone biosynthesis. Functionally, catalyzes the cross-linking of a glutamate residue and a tyrosine residue in the PqqA protein as part of the biosynthesis of pyrroloquinoline quinone (PQQ). The polypeptide is PqqA peptide cyclase (Rhizobium meliloti (strain 1021) (Ensifer meliloti)).